The sequence spans 119 residues: Holo-[acyl-carrier-protein] synthase (119 aa).

Mg(2+)-binding residues include D8 and E53.

This sequence belongs to the P-Pant transferase superfamily. AcpS family. Requires Mg(2+) as cofactor.

The protein resides in the cytoplasm. It catalyses the reaction apo-[ACP] + CoA = holo-[ACP] + adenosine 3',5'-bisphosphate + H(+). Transfers the 4'-phosphopantetheine moiety from coenzyme A to a Ser of acyl-carrier-protein. The sequence is that of Holo-[acyl-carrier-protein] synthase from Petrotoga mobilis (strain DSM 10674 / SJ95).